We begin with the raw amino-acid sequence, 305 residues long: Ribonuclease H (305 aa).

The catalysed reaction is Endonucleolytic cleavage to 5'-phosphomonoester.. Its function is as follows. Plays essential roles in DNA replication by removing the RNA primers from lagging strand fragments. Exhibits 5'to 3' exonuclease activity on either RNA/DNA or DNA/DNA duplexes and endonuclease activity on either flap or fork DNA structures. The polypeptide is Ribonuclease H (rnh) (Enterobacteria phage T4 (Bacteriophage T4)).